Reading from the N-terminus, the 1450-residue chain is DNA-directed RNA polymerase RPB1 homolog (1450 aa).

The protein belongs to the RNA polymerase beta' chain family. In terms of assembly, part of the viral DNA-directed RNA polymerase that consists of 8 polII-like subunits (RPB1, RPB2, RPB3, RPB5, RPB6, RPB7, RPB9, RPB10), a capping enzyme and a termination factor.

The protein localises to the virion. The catalysed reaction is RNA(n) + a ribonucleoside 5'-triphosphate = RNA(n+1) + diphosphate. Catalytic component of the DNA-directed RNA polymerase (RNAP) that catalyzes the transcription in the cytoplasm of viral DNA into RNA using the four ribonucleoside triphosphates as substrates. Forms the polymerase active center together with RPB2. Part of the core element with the central large cleft, the clamp element that moves to open and close the cleft and the jaws that are thought to grab the incoming DNA template. This chain is DNA-directed RNA polymerase RPB1 homolog, found in African swine fever virus (isolate Tick/South Africa/Pretoriuskop Pr4/1996) (ASFV).